The sequence spans 344 residues: DNA-directed RNA polymerase subunit alpha (344 aa).

Positions 1–232 (MGQYTINLRE…HLFLPPFGLE (232 aa)) are alpha N-terminal domain (alpha-NTD). The interval 270–344 (LIKDQFLEYS…KRFGINLKLK (75 aa)) is alpha C-terminal domain (alpha-CTD).

The protein belongs to the RNA polymerase alpha chain family. As to quaternary structure, in plastids the minimal PEP RNA polymerase catalytic core is composed of four subunits: alpha, beta, beta', and beta''. When a (nuclear-encoded) sigma factor is associated with the core the holoenzyme is formed, which can initiate transcription.

It localises to the plastid. The protein localises to the chloroplast. It carries out the reaction RNA(n) + a ribonucleoside 5'-triphosphate = RNA(n+1) + diphosphate. In terms of biological role, DNA-dependent RNA polymerase catalyzes the transcription of DNA into RNA using the four ribonucleoside triphosphates as substrates. This is DNA-directed RNA polymerase subunit alpha from Spirogyra maxima (Green alga).